The following is a 528-amino-acid chain: PC4 and SFRS1-interacting protein (528 aa).

The region spanning 7 to 64 (PGDLIFAKMKGYPHWPARVDEVPDGAVKPPTNKLPIFFFGTHETAFLGPKDIFPYSEN) is the PWWP domain. The disordered stretch occupies residues 61–348 (YSENKEKYGK…EKKRETSMDS (288 aa)). A Glycyl lysine isopeptide (Lys-Gly) (interchain with G-Cter in SUMO2) cross-link involves residue K75. Residues 92–106 (FSSQQASTKQSNASS) are compositionally biased toward polar residues. S102, S105, and S106 each carry phosphoserine. The segment covering 113-135 (KETNVSKEDTDQEEKASNEDVTK) has biased composition (basic and acidic residues). 2 positions are modified to phosphothreonine: T115 and T122. At S129 the chain carries Phosphoserine. T141 is subject to Phosphothreonine. Basic residues predominate over residues 144–153 (AARRGRKRKA). The Nuclear localization signal signature appears at 146–156 (RRGRKRKAEKQ). 2 positions are modified to phosphoserine: S176 and S205. Basic and acidic residues predominate over residues 212-260 (DEDKSKKKGPEEKQPKKQLKKEEEGQKEEEKPRKEPDKKEGKKEVESKR). Position 270 is a phosphoserine (S270). Residue T271 is modified to Phosphothreonine. Residues S272 and S274 each carry the phosphoserine modification. Basic residues predominate over residues 285-300 (KRKGGRNFQAAHRRNM). The span at 303–348 (GQHEKEAGDRKRKQEEQMETEQQNKDEGKKPEVKKVEKKRETSMDS) shows a compositional bias: basic and acidic residues. Coiled-coil stretches lie at residues 306-332 (EKEA…EGKK) and 369-393 (NRCI…KHTE). The integrase-binding domain (IBD) stretch occupies residues 338 to 415 (VEKKRETSMD…VSQVIMEKST (78 aa)). A Phosphoserine modification is found at S432. T435 is subject to Phosphothreonine. S441 carries the phosphoserine modification. Residues 444 to 471 (EQRQHEEANKTKDQGKKGPNKKLEKEPT) are compositionally biased toward basic and acidic residues. The interval 444 to 528 (EQRQHEEANK…ISLKESTLDN (85 aa)) is disordered. Polar residues predominate over residues 472–492 (GTKSLNGGSDAQESNHPQHNG). Over residues 496-528 (EDGKDSREASSKTKPPGEEREAEISLKESTLDN) the composition is skewed to basic and acidic residues. R515 is subject to Citrulline. Residue S520 is modified to Phosphoserine. At T525 the chain carries Phosphothreonine.

Belongs to the HDGF family. In terms of assembly, monomer. Interacts with IFRD1/PC4. Interacts (via IBD domain) with POGZ (via IBM motif) and CDCA7L (via IBM motifs). Interacts (via IBD domain) with KMT2A (via IBM motifs) with a moderate affinity whereas interacts with the KMT2A-MEN1 complex with a greater affinity; MEN1 enhances interaction of KMT2A with PSIP1. Interacts (via IBD domain) with IWS1 (via IBM motif), MED1 (via IBM motif) and DBF4 (via IBM motifs). Citrullinated by PADI4.

The protein resides in the nucleus. Functionally, transcriptional coactivator involved in neuroepithelial stem cell differentiation and neurogenesis. Involved in particular in lens epithelial cell gene regulation and stress responses. May play an important role in lens epithelial to fiber cell terminal differentiation. May play a protective role during stress-induced apoptosis. This chain is PC4 and SFRS1-interacting protein (Psip1), found in Mus musculus (Mouse).